Reading from the N-terminus, the 465-residue chain is UDP-N-acetylmuramate--L-alanine ligase (465 aa).

112–118 (GTHGKTT) is an ATP binding site.

The protein belongs to the MurCDEF family.

The protein resides in the cytoplasm. It catalyses the reaction UDP-N-acetyl-alpha-D-muramate + L-alanine + ATP = UDP-N-acetyl-alpha-D-muramoyl-L-alanine + ADP + phosphate + H(+). It functions in the pathway cell wall biogenesis; peptidoglycan biosynthesis. Functionally, cell wall formation. The protein is UDP-N-acetylmuramate--L-alanine ligase of Janthinobacterium sp. (strain Marseille) (Minibacterium massiliensis).